The primary structure comprises 205 residues: Protein-L-isoaspartate O-methyltransferase (205 aa).

The active site involves Ser-56.

It belongs to the methyltransferase superfamily. L-isoaspartyl/D-aspartyl protein methyltransferase family.

Its subcellular location is the cytoplasm. The enzyme catalyses [protein]-L-isoaspartate + S-adenosyl-L-methionine = [protein]-L-isoaspartate alpha-methyl ester + S-adenosyl-L-homocysteine. In terms of biological role, catalyzes the methyl esterification of L-isoaspartyl residues in peptides and proteins that result from spontaneous decomposition of normal L-aspartyl and L-asparaginyl residues. It plays a role in the repair and/or degradation of damaged proteins. The sequence is that of Protein-L-isoaspartate O-methyltransferase from Pyrobaculum arsenaticum (strain DSM 13514 / JCM 11321 / PZ6).